We begin with the raw amino-acid sequence, 859 residues long: Active breakpoint cluster region-related protein (859 aa).

Positions 31–84 are disordered; it reads AEGHEEQKGPPEGSETMPYIDESPTMSPQLSARSQGGGESISPTPPEGLAPGVE. The segment covering 54–64 has biased composition (polar residues); it reads PTMSPQLSARS. Ser-57 carries the post-translational modification Phosphoserine. One can recognise a DH domain in the interval 91–284; the sequence is MRKLVLSGFL…QNFLSSINED (194 aa). The PH domain maps to 301–459; that stretch reads QLVKDGFLVE…WREAIQKLQK (159 aa). A C2 domain is found at 484 to 613; it reads TVHNIPVTSN…ESKNWHTDVI (130 aa). One can recognise a Rho-GAP domain in the interval 647-845; the sequence is VKISVVTKRE…YYLQHPPISF (199 aa).

As to quaternary structure, interacts with DLG4. As to expression, expressed in brain, including the cortex, hippocampus, cerebellum, and brainstem, as well as the spinal cord (at protein level).

It localises to the cell projection. Its subcellular location is the dendritic spine. The protein localises to the axon. It is found in the synapse. Protein with a unique structure having two opposing regulatory activities toward small GTP-binding proteins. The C-terminus is a GTPase-activating protein domain which stimulates GTP hydrolysis by RAC1, RAC2 and CDC42. Accelerates the intrinsic rate of GTP hydrolysis of RAC1 or CDC42, leading to down-regulation of the active GTP-bound form. The central Dbl homology (DH) domain functions as guanine nucleotide exchange factor (GEF) that modulates the GTPases CDC42, RHOA and RAC1. Promotes the conversion of CDC42, RHOA and RAC1 from the GDP-bound to the GTP-bound form. Functions as an important negative regulator of neuronal RAC1 activity. Regulates macrophage functions such as CSF-1 directed motility and phagocytosis through the modulation of RAC1 activity. This chain is Active breakpoint cluster region-related protein, found in Rattus norvegicus (Rat).